A 264-amino-acid polypeptide reads, in one-letter code: Acyl-[acyl-carrier-protein]--UDP-N-acetylglucosamine O-acyltransferase (264 aa).

This sequence belongs to the transferase hexapeptide repeat family. LpxA subfamily. As to quaternary structure, homotrimer.

It is found in the cytoplasm. It carries out the reaction a (3R)-hydroxyacyl-[ACP] + UDP-N-acetyl-alpha-D-glucosamine = a UDP-3-O-[(3R)-3-hydroxyacyl]-N-acetyl-alpha-D-glucosamine + holo-[ACP]. It participates in glycolipid biosynthesis; lipid IV(A) biosynthesis; lipid IV(A) from (3R)-3-hydroxytetradecanoyl-[acyl-carrier-protein] and UDP-N-acetyl-alpha-D-glucosamine: step 1/6. In terms of biological role, involved in the biosynthesis of lipid A, a phosphorylated glycolipid that anchors the lipopolysaccharide to the outer membrane of the cell. The chain is Acyl-[acyl-carrier-protein]--UDP-N-acetylglucosamine O-acyltransferase from Chlorobaculum parvum (strain DSM 263 / NCIMB 8327) (Chlorobium vibrioforme subsp. thiosulfatophilum).